A 267-amino-acid polypeptide reads, in one-letter code: Methylglyoxal reductase DkgB (267 aa).

Tyr39 serves as the catalytic Proton donor. His97 contacts substrate. NADP(+) is bound at residue 179 to 231 (MTLAYGKALAEPVIKTIAEQHGATPAQVILSWAMQLGYGVIPSSTKAANLASN).

This sequence belongs to the aldo/keto reductase family. As to quaternary structure, monomer.

Its subcellular location is the cytoplasm. It carries out the reaction hydroxyacetone + NADP(+) = methylglyoxal + NADPH + H(+). Its function is as follows. Aldo-keto reductase that significantly contributes to cellular methylglyoxal detoxification by catalyzing the NADPH-dependent conversion of methylglyoxal to acetol. This is Methylglyoxal reductase DkgB from Yersinia pestis.